The sequence spans 65 residues: Large ribosomal subunit protein bL31 (65 aa).

Positions 16, 18, 36, and 39 each coordinate Zn(2+).

Belongs to the bacterial ribosomal protein bL31 family. Type A subfamily. As to quaternary structure, part of the 50S ribosomal subunit. Zn(2+) is required as a cofactor.

Binds the 23S rRNA. In Geobacter sulfurreducens (strain ATCC 51573 / DSM 12127 / PCA), this protein is Large ribosomal subunit protein bL31.